A 793-amino-acid chain; its full sequence is Spindle and centriole-associated protein 1 (793 aa).

Residues 1–29 form a disordered region; the sequence is MSYLRASRTSSNLSLAKKPSKTRKKLQAR. A compositionally biased stretch (basic residues) spans 18–27; that stretch reads KPSKTRKKLQ. Residues 312-405 are a coiled coil; the sequence is SLGLLNSMIM…LTAEILSLKE (94 aa). A disordered region spans residues 519-542; it reads KTVGNLSSHSAVPKRAANRLPSPP. Positions 622-712 form a coiled coil; the sequence is LQNEDLVSQM…LLKLIEQQKQ (91 aa). A compositionally biased stretch (polar residues) spans 718–739; it reads PTLSPITPQGRRTGSSLDTTPL. The disordered stretch occupies residues 718–783; the sequence is PTLSPITPQG…RSQAANDRGE (66 aa). The span at 740–753 shows a compositional bias: low complexity; that stretch reads SSCSTSGRRSSGAS. Residues 754–778 show a composition bias toward polar residues; sequence NKSESISTSVGSLRSASTGRRSQAA.

Its subcellular location is the cytoplasm. The protein resides in the cytoskeleton. It localises to the microtubule organizing center. The protein localises to the centrosome. It is found in the centriole. Its subcellular location is the spindle. Functionally, regulator required for centriole duplication. The sequence is that of Spindle and centriole-associated protein 1 (spice1) from Xenopus laevis (African clawed frog).